Reading from the N-terminus, the 329-residue chain is MASQLTDAFARKFYYLRLSITDVCNFRCTYCLPDGYKPSGVTNKGFLTVDEIRRVTRAFARLGTEKVRLTGGEPSLRRDFTDIIAAVRENDAIRQIAVTTNGYRLERDVASWRDAGLTGINVSVDSLDARQFHAITGQDKFNQVMAGIDAAFEAGFEKVKVNTVLMRDVNHHQLDTFLNWIQHRPIQLRFIELMETGEGSELFRKHHISGQVLRDELLRRGWIHQLRQRSDGPAQVFCHPDYAGEIGLIMPYEKDFCATCNRLRVSSIGKLHLCLFGEGGVNLRDLLEDDTQQQALEARISAALREKKQTHFLHQNNTGITQNLSYIGG.

Residues 8–234 (AFARKFYYLR…QLRQRSDGPA (227 aa)) form the Radical SAM core domain. Arg17 contributes to the GTP binding site. Residues Cys24 and Cys28 each contribute to the [4Fe-4S] cluster site. Tyr30 serves as a coordination point for S-adenosyl-L-methionine. Cys31 is a [4Fe-4S] cluster binding site. Arg68 lines the GTP pocket. Gly72 contributes to the S-adenosyl-L-methionine binding site. Thr99 serves as a coordination point for GTP. Ser123 contacts S-adenosyl-L-methionine. Lys160 serves as a coordination point for GTP. S-adenosyl-L-methionine is bound at residue Met194. Positions 257 and 260 each coordinate [4Fe-4S] cluster. 262-264 (RLR) lines the GTP pocket. Cys274 serves as a coordination point for [4Fe-4S] cluster.

It belongs to the radical SAM superfamily. MoaA family. As to quaternary structure, monomer and homodimer. Requires [4Fe-4S] cluster as cofactor.

It carries out the reaction GTP + AH2 + S-adenosyl-L-methionine = (8S)-3',8-cyclo-7,8-dihydroguanosine 5'-triphosphate + 5'-deoxyadenosine + L-methionine + A + H(+). Its pathway is cofactor biosynthesis; molybdopterin biosynthesis. Functionally, catalyzes the cyclization of GTP to (8S)-3',8-cyclo-7,8-dihydroguanosine 5'-triphosphate. The chain is GTP 3',8-cyclase from Escherichia coli (strain K12 / MC4100 / BW2952).